The primary structure comprises 202 residues: Matrix protein (202 aa).

Residues 12-33 (RDEDTQKPSPVSAPPDDDDLWL) are disordered. Residues 35–38 (PPEY) carry the PPXY motif motif. An essential for glycoprotein binding region spans residues 115–151 (KLRRTLIFQWADSRGPLEGEELEYSQEITWDDDTEFV).

The protein belongs to the lyssavirus matrix protein family. In terms of assembly, homomultimer. Interacts with nucleoprotein and with the cytoplasmic domain of glycoprotein. Interacts with host ATP6V1A; this interaction plays an important role in virion uncoating after viral entry.

Its subcellular location is the virion membrane. The protein localises to the host endomembrane system. The protein resides in the host cytoplasm. In terms of biological role, plays a major role in assembly, budding and uncoating of virion after membrane fusion. Completely covers the ribonucleoprotein coil and keep it in condensed bullet-shaped form. Inhibits viral transcription and stimulates replication. Plays a major role in early induction of TRAIL-mediated apoptosis in infected neurons. Inhibits the integrated stress response (ISR) in the infected cell by blocking the formation of stress granules. This Rabies virus (strain PM1503/AVO1) (RABV) protein is Matrix protein (M).